The following is an 814-amino-acid chain: Protein kintoun (814 aa).

Residues 234 to 246 show a composition bias toward low complexity; the sequence is AANTARSPASPAP. 2 disordered regions span residues 234 to 259 and 357 to 490; these read AANT…EPRC and ARQE…MGDP. Over residues 388-404 the composition is skewed to basic and acidic residues; the sequence is AAREESADGTGADHGEK. Residues serine 444 and serine 618 each carry the phosphoserine modification. The interval 654-686 is disordered; it reads AGLQGKGKGVREGCPLSEAEAADQSATSPAASD. The span at 675 to 686 shows a compositional bias: low complexity; sequence ADQSATSPAASD.

It belongs to the PIH1 family. Kintoun subfamily. Interacts with DNAI2 and HSPA1A. Interacts with CFAP300. Interacts with DNAAF4. Interacts with DNAAF6/PIH1D3. As to expression, expressed in nearly all organs of adult, with higher expression in tissues known to have motile cilia and flagella, such as brain and testis.

Its subcellular location is the cytoplasm. The protein localises to the dynein axonemal particle. Required for cytoplasmic pre-assembly of axonemal dyneins, thereby playing a central role in motility in cilia and flagella. Involved in pre-assembly of dynein arm complexes in the cytoplasm before intraflagellar transport loads them for the ciliary compartment. In Mus musculus (Mouse), this protein is Protein kintoun.